The chain runs to 112 residues: uncharacterized protein (112 aa).

A disordered region spans residues 91–112 (ENQRKKGTRKRRSSEVDSKEKS). The segment covering 103–112 (SSEVDSKEKS) has biased composition (basic and acidic residues).

This is an uncharacterized protein from Caenorhabditis elegans.